Here is an 813-residue protein sequence, read N- to C-terminus: MDNTVRLDQLHDEQYRRILPTLNGYFEQKDTSLSRLDPRNYRNENYKKMNAIIPVLLRAHQCHPTDWKLLFANAQTLNFYSALLEGLLMFMFQSFSTTVGFGSNMEFLRCMLKTYEYLYTVAKTLPSPELGQRVMSFQNHFMRNWNKVQCESLLFDQVKDLLSHAHDFVAPPLFNLESVIKRDYFKITCDKLRYENLCVELFHLDNGNMAIFKVNTQTLPLYTNEQTHELLLRLTRNIDMGAYQDPLFQIGRTLLFPTIRPMDLRIADESRKSILLETKTGNGVTLALTPYDTLAWSQHWRPFVQSLCAVADSPKAFLSDRNESTFGSPINKDTITSAGTRGLGISLKKSEVRTNLDTGLRKSKPLASEALSISEIESLNMKKLMELNDSTDASTMNSSMKSPVPTNIRHIQEPSNIIEQMSPVIGSRVDDIDSIISDDDGINNEGSLGGSPVFNLSAEFHKPQLTKRKSSSFLNLFKKDKSKSQKNSTDSLAKLSDTKSIHPPESAMSSHASTPSSTSKSSKSSKSSSTLSPSTCKLPSSVKLDTNNVLLDTLVKLSQWRNNSWRFFSSSWLQLQVVNSNQGRYMFVVQDDNSNLKLCIAIGERWTISRTTAQDIQIRFPPTDVVASVAEPVPTLLSVRCPQVDNIANLLKHCKKNEVILTSSNNMSNSATQLTLGSNSSSILSNNVSNMSFSRSSTASNDLSHGWSKPQVLDSSKDCKSLLLLSKIKVRLHKYDQQYGWKMTKVGLLNVYSREYNGSVAGCKFEMDDTESFISSISDLKRIGRTGISAGERLVEFKNQNVADETYKLLGAL.

Residues 478–537 form a disordered region; sequence KKDKSKSQKNSTDSLAKLSDTKSIHPPESAMSSHASTPSSTSKSSKSSKSSSTLSPSTCK. Positions 506–537 are enriched in low complexity; it reads SAMSSHASTPSSTSKSSKSSKSSSTLSPSTCK.

Belongs to the UPF0508 family.

This Kluyveromyces lactis (strain ATCC 8585 / CBS 2359 / DSM 70799 / NBRC 1267 / NRRL Y-1140 / WM37) (Yeast) protein is UPF0508 protein KLLA0A06237g.